Consider the following 156-residue polypeptide: Zinc finger SWIM domain-containing protein 7 homolog (156 aa).

The SWIM-type zinc finger occupies 82-120 (YMCLIQGDYCSCPSFNFSVLLKSDSVYCKHQISSILAEI).

Belongs to the SWS1 family.

Its subcellular location is the nucleus. Its function is as follows. May be involved in the homologous recombination repair (HRR) pathway of double-stranded DNA breaks arising during DNA replication or induced by DNA-damaging agents. The chain is Zinc finger SWIM domain-containing protein 7 homolog (zswim7) from Dictyostelium discoideum (Social amoeba).